The sequence spans 449 residues: Chlorobenzene dioxygenase subunit alpha (449 aa).

The 110-residue stretch at 54–163 folds into the Rieske domain; the sequence is WLLLGHETQI…VATYKGLIFA (110 aa). 4 residues coordinate [2Fe-2S] cluster: Cys-96, His-98, Cys-116, and His-119. Fe cation-binding residues include His-222, His-228, and Asp-376.

Belongs to the bacterial ring-hydroxylating dioxygenase alpha subunit family. This dioxygenase system consists of four proteins: the two subunits of the oxygenase component (TecA1 and TecA2), a ferredoxin (TecA3) and a ferredoxin reductase (TecA4). [2Fe-2S] cluster serves as cofactor. It depends on Fe cation as a cofactor.

The catalysed reaction is chlorobenzene + NADH + O2 + H(+) = (1R,2R)-3-chlorocyclohexa-3,5-diene-1,2-diol + NAD(+). Its pathway is aromatic compound metabolism. In terms of biological role, part of the oxygenase component of the chlorobenzene dioxygenase system that catalyzes the dihydroxylation of a range of aromatic compounds, including chlorinated benzenes and toluenes, and dinuclear aromatics such as biphenyl and dibenzo-p-dioxin. The alpha subunit is responsible for substrate specificity. The chain is Chlorobenzene dioxygenase subunit alpha from Cupriavidus sp. (strain PS12).